Consider the following 78-residue polypeptide: Large ribosomal subunit protein bL28 (78 aa).

It belongs to the bacterial ribosomal protein bL28 family.

The sequence is that of Large ribosomal subunit protein bL28 from Francisella philomiragia subsp. philomiragia (strain ATCC 25017 / CCUG 19701 / FSC 153 / O#319-036).